A 205-amino-acid chain; its full sequence is Ras-related protein RABD1 (205 aa).

An N-acetylserine modification is found at serine 2. GTP is bound by residues 15–23 (GDSSVGKSC), 33–40 (YIDSYIST), 63–67 (DTAGQ), 121–124 (NKND), and 151–153 (SAK). Positions 37–45 (YISTIGVDF) match the Effector region motif. Polar residues-rich tracts occupy residues 174–186 (GSQT…SGPG) and 194–205 (PIQQNNGGCCGQ). The disordered stretch occupies residues 174-205 (GSQTNANKTSGPGTVQMKGQPIQQNNGGCCGQ). S-geranylgeranyl cysteine attachment occurs at residues cysteine 202 and cysteine 203.

This sequence belongs to the small GTPase superfamily. Rab family. Does not interact with GC5. Interacts with XI-2/MYA2.

The protein resides in the golgi apparatus. The protein localises to the trans-Golgi network membrane. It is found in the golgi apparatus membrane. In terms of biological role, protein transport. Regulator of membrane traffic from the Golgi apparatus towards the endoplasmic reticulum (ER). In Arabidopsis thaliana (Mouse-ear cress), this protein is Ras-related protein RABD1 (RABD1).